The following is a 112-amino-acid chain: ATP-dependent Clp protease adapter protein ClpS (112 aa).

It belongs to the ClpS family. In terms of assembly, binds to the N-terminal domain of the chaperone ClpA.

In terms of biological role, involved in the modulation of the specificity of the ClpAP-mediated ATP-dependent protein degradation. This is ATP-dependent Clp protease adapter protein ClpS from Rhodococcus opacus (strain B4).